The sequence spans 679 residues: MASGAPDGKWKVVKKGKKSGERREGERKALTESNVTPGGTAPIKMANTVYEMGFDRIHKKQNKEQVPPNNMSSEQPQKQQQNPGKKKPQSGDSVCKQSKFHTLECALKALDVAELQRDLEKSQNMFPENPSIWVKDLAGYLNYKLQTVKNDVLIQQSHDYPYCLINKELKGIVRSLLAKAPHVLDVMVDHCIFSMLQELDKPTGESLHGYRICIQAVLLDKPKTVTSNLPKYLELLRSHLNRPMKCLTVMWAVGQAGFTDFTEGLKVWLGLMFPVLGVKNLTPYAILYLDRLLLAHSNLTKGFGMIGPKDFFPILDFAFMPNNSLTPSQQENLRNLYPKLKVLALGATPESTLHTYFPSFLSRATPSCPAEMRKELIHSLTDCLNKDSLSFSVWRQLYTKHLSQSSLLLQHLVETWDSNSRAMRKSVRETVHSFKVTNGEFSGKGSSSKDLEACDAACQALLHKMKSGGFPWWRLIVIAFVFLFGSVLYDVRTHNSFQESTSAQILQQSGLLSVSREAWNKVSNYSLQGQSWLERNVPQYYSQAVEVLGPVLEQVWAKTQEGGAYACEKGSVLLSYAKDNLPRLIEWLHSSIPDSVFQFIEYLRELLLHLHQTYLLPAVTYLEAAVQNSWQQYVKSCNGKVTWDCVRGQVGNISHSSWTYLQNTTMTFTNWALTIISRH.

Residues 1–94 (MASGAPDGKW…KKKPQSGDSV (94 aa)) form a disordered region. Residues 18-30 (KSGERREGERKAL) show a composition bias toward basic and acidic residues. N-linked (GlcNAc...) asparagine glycans are attached at residues Asn70, Asn298, and Asn322. Transmembrane regions (helical) follow at residues 468–488 (GGFP…GSVL) and 606–626 (LLLH…EAAV).

This sequence belongs to the TMEM214 family. Constitutively interacts with CASP4; required for the localization of procaspase 4 to the ER.

It is found in the endoplasmic reticulum membrane. Critical mediator, in cooperation with CASP4, of endoplasmic reticulum-stress induced apoptosis. Required or the activation of CASP4 following endoplasmic reticulum stress. The chain is Transmembrane protein 214-B (tmem214-b) from Xenopus laevis (African clawed frog).